Here is a 379-residue protein sequence, read N- to C-terminus: Queuine tRNA-ribosyltransferase (379 aa).

The active-site Proton acceptor is the Asp94. Substrate-binding positions include 94-98 (DSGGF), Asp148, Gln191, and Gly218. Residues 249–255 (GVGSPDA) form an RNA binding region. Asp268 (nucleophile) is an active-site residue. Residues 273–277 (TRIAR) are RNA binding; important for wobble base 34 recognition. Positions 306, 308, 311, and 337 each coordinate Zn(2+).

The protein belongs to the queuine tRNA-ribosyltransferase family. As to quaternary structure, homodimer. Within each dimer, one monomer is responsible for RNA recognition and catalysis, while the other monomer binds to the replacement base PreQ1. Zn(2+) is required as a cofactor.

It carries out the reaction 7-aminomethyl-7-carbaguanine + guanosine(34) in tRNA = 7-aminomethyl-7-carbaguanosine(34) in tRNA + guanine. Its pathway is tRNA modification; tRNA-queuosine biosynthesis. Its function is as follows. Catalyzes the base-exchange of a guanine (G) residue with the queuine precursor 7-aminomethyl-7-deazaguanine (PreQ1) at position 34 (anticodon wobble position) in tRNAs with GU(N) anticodons (tRNA-Asp, -Asn, -His and -Tyr). Catalysis occurs through a double-displacement mechanism. The nucleophile active site attacks the C1' of nucleotide 34 to detach the guanine base from the RNA, forming a covalent enzyme-RNA intermediate. The proton acceptor active site deprotonates the incoming PreQ1, allowing a nucleophilic attack on the C1' of the ribose to form the product. After dissociation, two additional enzymatic reactions on the tRNA convert PreQ1 to queuine (Q), resulting in the hypermodified nucleoside queuosine (7-(((4,5-cis-dihydroxy-2-cyclopenten-1-yl)amino)methyl)-7-deazaguanosine). The sequence is that of Queuine tRNA-ribosyltransferase from Oceanobacillus iheyensis (strain DSM 14371 / CIP 107618 / JCM 11309 / KCTC 3954 / HTE831).